The sequence spans 301 residues: Ribosomal RNA small subunit methyltransferase H (301 aa).

S-adenosyl-L-methionine contacts are provided by residues 33–35, Asp-52, Phe-79, Asp-100, and Gln-107; that span reads GGH.

It belongs to the methyltransferase superfamily. RsmH family.

It is found in the cytoplasm. It catalyses the reaction cytidine(1402) in 16S rRNA + S-adenosyl-L-methionine = N(4)-methylcytidine(1402) in 16S rRNA + S-adenosyl-L-homocysteine + H(+). Its function is as follows. Specifically methylates the N4 position of cytidine in position 1402 (C1402) of 16S rRNA. The chain is Ribosomal RNA small subunit methyltransferase H from Mycoplasmopsis synoviae (strain 53) (Mycoplasma synoviae).